Here is a 298-residue protein sequence, read N- to C-terminus: Cyclin-dependent kinase 2 homolog (298 aa).

The Protein kinase domain maps to 4-284; the sequence is YHKMEKIGEG…AKEALKHDYF (281 aa). ATP contacts are provided by residues 10-18 and Lys32; that span reads IGEGTYGVV. Phosphothreonine is present on Thr14. A Phosphotyrosine modification is found at Tyr15. Asp125 (proton acceptor) is an active-site residue. Thr158 bears the Phosphothreonine mark.

The protein belongs to the protein kinase superfamily. CMGC Ser/Thr protein kinase family. CDC2/CDKX subfamily. As to quaternary structure, may form a complex composed of at least the catalytic subunit CRK2 and a cyclin. Requires Mg(2+) as cofactor.

The protein resides in the cytoplasm. It catalyses the reaction L-seryl-[protein] + ATP = O-phospho-L-seryl-[protein] + ADP + H(+). The catalysed reaction is L-threonyl-[protein] + ATP = O-phospho-L-threonyl-[protein] + ADP + H(+). The enzyme catalyses [DNA-directed RNA polymerase] + ATP = phospho-[DNA-directed RNA polymerase] + ADP + H(+). Its activity is regulated as follows. Phosphorylation at Thr-14 or Tyr-15 inactivates the enzyme, while phosphorylation at Thr-158 activates it. Its function is as follows. Serine/threonine-protein kinase. Involved in the control of the cell cycle. Required for entry into S-phase and mitosis. Probable component of the kinase complex that phosphorylates the repetitive C-terminus of RNA polymerase II. The polypeptide is Cyclin-dependent kinase 2 homolog (Theileria annulata).